We begin with the raw amino-acid sequence, 73 residues long: Conotoxin Leo-O2 (73 aa).

A signal peptide spans 1 to 22; it reads MKLTCVLIIAVLFLTACQLVTA. The propeptide occupies 23–47; that stretch reads DYSGDEQQYRAMRLIDAMRNFGDTR. Cystine bridges form between C49-C59, C56-C64, and C58-C69.

This sequence belongs to the conotoxin O1 superfamily. As to expression, expressed by the venom duct.

The protein localises to the secreted. The protein is Conotoxin Leo-O2 of Conus leopardus (Leopard cone).